The primary structure comprises 83 residues: Small ribosomal subunit protein bS16 (83 aa).

The protein belongs to the bacterial ribosomal protein bS16 family.

The chain is Small ribosomal subunit protein bS16 from Azoarcus sp. (strain BH72).